The chain runs to 115 residues: HTH-type transcriptional regulator SarR (115 aa).

Positions 51–74 (SKEIAKCSEFKPYYLTKALQKLKD) form a DNA-binding region, H-T-H motif.

The protein belongs to the SarA family. As to quaternary structure, homodimer.

The protein localises to the cytoplasm. Its function is as follows. Negative regulator of sarA transcription at late exponential and stationary growth phases. It contributes to the modulation of target genes downstream of the sarA regulatory cascade. Also, positively regulates expression of primary transcripts RNAII and RNAIII generated by agr (virulence accessory gene regulator) locus. This Staphylococcus aureus (strain NCTC 8325 / PS 47) protein is HTH-type transcriptional regulator SarR (sarR).